We begin with the raw amino-acid sequence, 252 residues long: Mitochondrial cardiolipin hydrolase (252 aa).

Residues 1-4 (MGRL) are Mitochondrial intermembrane-facing. The required for mitochondrial localization stretch occupies residues 1–39 (MGRLSWQVAAAAAVGLALTLEALPWVLRWLRSRRRRPRR). Residues 5 to 27 (SWQVAAAAAVGLALTLEALPWVL) form a helical membrane-spanning segment. Topologically, residues 28–252 (RWLRSRRRRP…TCGTSSESQT (225 aa)) are cytoplasmic. A C3H1-type; atypical zinc finger spans residues 45 to 78 (PSQVTCTEALLRAPGAELAELPEGCPCGLPHGES). A PLD phosphodiesterase domain is found at 151 to 178 (DPGYMHHKFAIVDKRVLITGSLNWTTQA). Active-site residues include H156, K158, and D163.

The protein belongs to the phospholipase D family. MitoPLD/Zucchini subfamily. As to quaternary structure, homodimer. Interacts with MOV10L1. Interacts with MIGA1 and MIGA2; possibly facilitating homodimer formation. Interacts with GK2. Predominantly expressed in testis and ovary, but not limited to gonads (at protein level). It is also found in brain, heart, pituitary gland, prostate, pancreas, thyroid, bone marrow, lung and muscle.

It localises to the mitochondrion outer membrane. The protein localises to the golgi apparatus. It catalyses the reaction a cardiolipin + H2O = a 1,2-diacyl-sn-glycero-3-phospho-(1'-sn-glycerol) + a 1,2-diacyl-sn-glycero-3-phosphate + H(+). Its activity is regulated as follows. MYC stimulates its phospholipase activity. MIGA1 and MIGA2 increase PLD6 self-association affinity and affects the homodimer conformation facilitating its phospholipase activity over the nuclease activity. Single stranded DNA (ssDNA) hydrolase activity does not depend upon, but is stimulated by the presence of Ca(2+) and Mn(2+). Presents phospholipase and nuclease activities, depending on the different physiological conditions. Interaction with Mitoguardin (MIGA1 or MIGA2) affects the dimer conformation, facilitating the lipase activity over the nuclease activity. Plays a key role in mitochondrial fusion and fission via its phospholipase activity. In its phospholipase role, it uses the mitochondrial lipid cardiolipin as substrate to generate phosphatidate (PA or 1,2-diacyl-sn-glycero-3-phosphate), a second messenger signaling lipid. Production of PA facilitates Mitofusin-mediated fusion, whereas the cleavage of PA by the Lipin family of phosphatases produces diacylgycerol (DAG) which promotes mitochondrial fission. Both Lipin and DAG regulate mitochondrial dynamics and membrane fusion/fission, important processes for adapting mitochondrial metabolism to changes in cell physiology. Mitochondrial fusion enables cells to cope with the increased nucleotide demand during DNA synthesis. Mitochondrial function and dynamics are closely associated with biological processes such as cell growth, proliferation, and differentiation. Mediator of MYC activity, promotes mitochondrial fusion and activates AMPK which in turn inhibits YAP/TAZ, thereby inducing cell growth and proliferation. The endonuclease activity plays a critical role in PIWI-interacting RNA (piRNA) biogenesis during spermatogenesis. Implicated in spermatogenesis and sperm fertility in testicular germ cells, its single strand-specific nuclease activity is critical for the biogenesis/maturation of PIWI-interacting RNA (piRNA). MOV10L1 selectively binds to piRNA precursors and funnels them to the endonuclease that catalyzes the first cleavage step of piRNA processing to generate piRNA intermediate fragments that are subsequently loaded to Piwi proteins. Cleaves either DNA or RNA substrates with similar affinity, producing a 5' phosphate end, in this way it participates in the processing of primary piRNA transcripts. piRNAs provide essential protection against the activity of mobile genetic elements. piRNA-mediated transposon silencing is thus critical for maintaining genome stability, in particular in germline cells when transposons are mobilized as a consequence of wide-spread genomic demethylation. PA may act as signaling molecule in the recognition/transport of the precursor RNAs of primary piRNAs. Interacts with tesmin in testes, suggesting a role in spermatogenesis via association with its interacting partner. The protein is Mitochondrial cardiolipin hydrolase (PLD6) of Homo sapiens (Human).